A 365-amino-acid chain; its full sequence is Histidinol-phosphate aminotransferase (365 aa).

The residue at position 221 (Lys-221) is an N6-(pyridoxal phosphate)lysine.

This sequence belongs to the class-II pyridoxal-phosphate-dependent aminotransferase family. Histidinol-phosphate aminotransferase subfamily. As to quaternary structure, homodimer. It depends on pyridoxal 5'-phosphate as a cofactor.

It catalyses the reaction L-histidinol phosphate + 2-oxoglutarate = 3-(imidazol-4-yl)-2-oxopropyl phosphate + L-glutamate. Its pathway is amino-acid biosynthesis; L-histidine biosynthesis; L-histidine from 5-phospho-alpha-D-ribose 1-diphosphate: step 7/9. This is Histidinol-phosphate aminotransferase from Rhodopseudomonas palustris (strain HaA2).